A 277-amino-acid chain; its full sequence is Small ribosomal subunit protein uS2 (277 aa).

2 stretches are compositionally biased toward basic and acidic residues: residues 227-256 (QARAERQEAAAKEAAGDADKAPAEAERTEA) and 267-277 (SEAKAEGNTEA). The interval 227–277 (QARAERQEAAAKEAAGDADKAPAEAERTEAPAEEAPAEAQSEAKAEGNTEA) is disordered.

It belongs to the universal ribosomal protein uS2 family.

The polypeptide is Small ribosomal subunit protein uS2 (Corynebacterium jeikeium (strain K411)).